A 428-amino-acid polypeptide reads, in one-letter code: Enolase (428 aa).

Q163 is a (2R)-2-phosphoglycerate binding site. E205 acts as the Proton donor in catalysis. Mg(2+) is bound by residues D242, E286, and D313. K338, R367, S368, and K389 together coordinate (2R)-2-phosphoglycerate. K338 serves as the catalytic Proton acceptor.

This sequence belongs to the enolase family. Requires Mg(2+) as cofactor.

It localises to the cytoplasm. The protein resides in the secreted. The protein localises to the cell surface. The catalysed reaction is (2R)-2-phosphoglycerate = phosphoenolpyruvate + H2O. It participates in carbohydrate degradation; glycolysis; pyruvate from D-glyceraldehyde 3-phosphate: step 4/5. Its function is as follows. Catalyzes the reversible conversion of 2-phosphoglycerate (2-PG) into phosphoenolpyruvate (PEP). It is essential for the degradation of carbohydrates via glycolysis. This is Enolase from Bordetella petrii (strain ATCC BAA-461 / DSM 12804 / CCUG 43448).